Here is a 513-residue protein sequence, read N- to C-terminus: Cobyric acid synthase (513 aa).

In terms of domain architecture, GATase cobBQ-type spans 252 to 457 (KIDIAVIRLP…LHGIFDEEGI (206 aa)). Cysteine 333 functions as the Nucleophile in the catalytic mechanism. The active site involves histidine 449.

It belongs to the CobB/CobQ family. CobQ subfamily.

It functions in the pathway cofactor biosynthesis; adenosylcobalamin biosynthesis. Catalyzes amidations at positions B, D, E, and G on adenosylcobyrinic A,C-diamide. NH(2) groups are provided by glutamine, and one molecule of ATP is hydrogenolyzed for each amidation. The protein is Cobyric acid synthase of Lachnoclostridium phytofermentans (strain ATCC 700394 / DSM 18823 / ISDg) (Clostridium phytofermentans).